We begin with the raw amino-acid sequence, 426 residues long: Serine--tRNA ligase (426 aa).

Residue Thr-229–Glu-231 coordinates L-serine. Arg-260–Glu-262 is a binding site for ATP. Glu-283 is an L-serine binding site. Glu-347–Ser-350 is a binding site for ATP. Ser-383 is an L-serine binding site.

Belongs to the class-II aminoacyl-tRNA synthetase family. Type-1 seryl-tRNA synthetase subfamily. In terms of assembly, homodimer. The tRNA molecule binds across the dimer.

It is found in the cytoplasm. It catalyses the reaction tRNA(Ser) + L-serine + ATP = L-seryl-tRNA(Ser) + AMP + diphosphate + H(+). The enzyme catalyses tRNA(Sec) + L-serine + ATP = L-seryl-tRNA(Sec) + AMP + diphosphate + H(+). Its pathway is aminoacyl-tRNA biosynthesis; selenocysteinyl-tRNA(Sec) biosynthesis; L-seryl-tRNA(Sec) from L-serine and tRNA(Sec): step 1/1. Catalyzes the attachment of serine to tRNA(Ser). Is also able to aminoacylate tRNA(Sec) with serine, to form the misacylated tRNA L-seryl-tRNA(Sec), which will be further converted into selenocysteinyl-tRNA(Sec). The protein is Serine--tRNA ligase of Rickettsia bellii (strain OSU 85-389).